A 181-amino-acid chain; its full sequence is Small ribosomal subunit protein bS16 (181 aa).

The tract at residues 150–181 is disordered; the sequence is KKAAEEAAKAAAEAPAEEAAPAEEAATEAAAE. A compositionally biased stretch (low complexity) spans 158–181; it reads KAAAEAPAEEAAPAEEAATEAAAE.

Belongs to the bacterial ribosomal protein bS16 family.

The chain is Small ribosomal subunit protein bS16 from Bacteroides fragilis (strain ATCC 25285 / DSM 2151 / CCUG 4856 / JCM 11019 / LMG 10263 / NCTC 9343 / Onslow / VPI 2553 / EN-2).